The sequence spans 569 residues: Peroxisomal targeting signal receptor (569 aa).

Cys-9 participates in a covalent cross-link: Glycyl cysteine thioester (Cys-Gly) (interchain with G-Cter in ubiquitin). The segment at 10–32 is amphipathic helix 1 (AH1); it reads AANANPLAQFFKQSQHDTSLEQS. Residue Lys-21 forms a Glycyl lysine isopeptide (Lys-Gly) (interchain with G-Cter in ubiquitin) linkage. The disordered stretch occupies residues 23-42; the sequence is SQHDTSLEQSLRNSAHDTHQ. Positions 57–72 are amphipathic helix 2 (AH2); it reads RAHMEQFMNQSTPFNF. 2 short sequence motifs (wxxxF/Y motif) span residues 118–122 and 183–187; these read WSSEF and WEQQF. The segment at 218–234 is amphipathic helix 4 (AH4); it reads FDQVWDNIQETYADNML. Positions 243–247 match the WxxxF/Y motif 3 motif; that stretch reads WEKDF. TPR repeat units follow at residues 272–305, 306–339, 340–377, 378–415, 416–449, 450–483, and 484–517; these read LDAY…NPGH, VDAW…SPQN, LVAL…VAER, ARNA…ANMD, SEVQ…NPND, ALAW…NPNF, and VRAR…HEVE.

The protein belongs to the peroxisomal targeting signal receptor family. As to quaternary structure, interacts (via WxxxF/Y and LVxEF motifs) with PEX14; promoting translocation through the PEX13-PEX14 docking complex. In terms of processing, monoubiquitinated at Cys-9 by PEX2 during PEX5 passage through the retrotranslocation channel: monoubiquitination acts as a signal for PEX5 extraction and is required for proper export from peroxisomes and recycling. When PEX5 recycling is compromised, polyubiquitinated at Lys-21 by PEX10 during its passage through the retrotranslocation channel, leading to its degradation.

It localises to the cytoplasm. The protein resides in the cytosol. The protein localises to the peroxisome matrix. In terms of biological role, receptor that mediates peroxisomal import of proteins containing a C-terminal PTS1-type tripeptide peroxisomal targeting signal (SKL-type). Binds to cargo proteins containing a PTS1 peroxisomal targeting signal in the cytosol, and translocates them into the peroxisome matrix by passing through the PEX13-PEX14 docking complex along with cargo proteins. PEX5 receptor is then retrotranslocated into the cytosol, leading to release of bound cargo in the peroxisome matrix, and reset for a subsequent peroxisome import cycle. In Pichia angusta (Yeast), this protein is Peroxisomal targeting signal receptor (PEX5).